The sequence spans 519 residues: Protein nucleotidyltransferase YdiU (519 aa).

Residues Gly101, Gly103, Arg104, Lys124, Asp136, Gly137, Arg194, and Arg201 each contribute to the ATP site. Asp271 functions as the Proton acceptor in the catalytic mechanism. Asn272 and Asp281 together coordinate Mg(2+). Residue Asp281 coordinates ATP.

Belongs to the SELO family. Mg(2+) is required as a cofactor. Requires Mn(2+) as cofactor.

It catalyses the reaction L-seryl-[protein] + ATP = 3-O-(5'-adenylyl)-L-seryl-[protein] + diphosphate. The catalysed reaction is L-threonyl-[protein] + ATP = 3-O-(5'-adenylyl)-L-threonyl-[protein] + diphosphate. The enzyme catalyses L-tyrosyl-[protein] + ATP = O-(5'-adenylyl)-L-tyrosyl-[protein] + diphosphate. It carries out the reaction L-histidyl-[protein] + UTP = N(tele)-(5'-uridylyl)-L-histidyl-[protein] + diphosphate. It catalyses the reaction L-seryl-[protein] + UTP = O-(5'-uridylyl)-L-seryl-[protein] + diphosphate. The catalysed reaction is L-tyrosyl-[protein] + UTP = O-(5'-uridylyl)-L-tyrosyl-[protein] + diphosphate. Functionally, nucleotidyltransferase involved in the post-translational modification of proteins. It can catalyze the addition of adenosine monophosphate (AMP) or uridine monophosphate (UMP) to a protein, resulting in modifications known as AMPylation and UMPylation. This chain is Protein nucleotidyltransferase YdiU, found in Azoarcus sp. (strain BH72).